We begin with the raw amino-acid sequence, 405 residues long: UDP-N-acetylglucosamine--N-acetylmuramyl-(pentapeptide) pyrophosphoryl-undecaprenol N-acetylglucosamine transferase (405 aa).

Residues 11–13 (TGG), Asn-127, Arg-168, Ser-191, Ile-248, and Gln-293 contribute to the UDP-N-acetyl-alpha-D-glucosamine site.

This sequence belongs to the glycosyltransferase 28 family. MurG subfamily.

The protein localises to the cell inner membrane. It catalyses the reaction di-trans,octa-cis-undecaprenyl diphospho-N-acetyl-alpha-D-muramoyl-L-alanyl-D-glutamyl-meso-2,6-diaminopimeloyl-D-alanyl-D-alanine + UDP-N-acetyl-alpha-D-glucosamine = di-trans,octa-cis-undecaprenyl diphospho-[N-acetyl-alpha-D-glucosaminyl-(1-&gt;4)]-N-acetyl-alpha-D-muramoyl-L-alanyl-D-glutamyl-meso-2,6-diaminopimeloyl-D-alanyl-D-alanine + UDP + H(+). It participates in cell wall biogenesis; peptidoglycan biosynthesis. In terms of biological role, cell wall formation. Catalyzes the transfer of a GlcNAc subunit on undecaprenyl-pyrophosphoryl-MurNAc-pentapeptide (lipid intermediate I) to form undecaprenyl-pyrophosphoryl-MurNAc-(pentapeptide)GlcNAc (lipid intermediate II). This chain is UDP-N-acetylglucosamine--N-acetylmuramyl-(pentapeptide) pyrophosphoryl-undecaprenol N-acetylglucosamine transferase, found in Sorangium cellulosum (strain So ce56) (Polyangium cellulosum (strain So ce56)).